The sequence spans 584 residues: Kinesin-like protein KIN-10C (584 aa).

Residues 11 to 324 enclose the Kinesin motor domain; that stretch reads PVRVVLRVRP…VSLAARSRHV (314 aa). Position 99 to 106 (99 to 106) interacts with ATP; it reads GATGSGKT. 2 disordered regions span residues 377 to 398 and 445 to 469; these read SMSHKKQSASGRVSGRGKAMDQ and DKTGSSLRKALSPISSNMDPQKQRT.

It belongs to the TRAFAC class myosin-kinesin ATPase superfamily. Kinesin family. KIN-10 subfamily.

The protein is Kinesin-like protein KIN-10C of Oryza sativa subsp. japonica (Rice).